Reading from the N-terminus, the 266-residue chain is MALHQYLSETYGPTKPKNKTKKKKKESKSDANSDKTSLIVKERLSTLQQEQEKSGVASFSKFDKQKSKNIWKNLETNELSHAITHPSASSITGNESKNDLKEIRAQEPLVTVADKSKTRKTIYRDAQGHKIQEDSKIDDSSFSRSKYEDEKAAEREQYLKNLNMGDVQKLGINVDAHDKKKNQTASSLTIEDPAITFTHDKERTVKTSLLGRKLYDKPAPENRFAIMPGSRWDGVHRSNGFEEKWFAKQNEINEKKVQSYTLQEDY.

Disordered regions lie at residues 1–37 (MALH…DKTS) and 118–149 (TRKT…KYED). Residues 16 to 26 (PKNKTKKKKKE) show a composition bias toward basic residues. A compositionally biased stretch (basic and acidic residues) spans 122-149 (IYRDAQGHKIQEDSKIDDSSFSRSKYED).

Belongs to the CWC26 family. Belongs to the pre-mRNA retention and splicing (RES) complex composed of at least BUD13, IST3 and PML1. May also belong to the CWC complex (or CEF1-associated complex) composed of the U2, U5 and U6 snRNAs and at least BUD13, BUD31, BRR2, CDC40, CEF1, CLF1, CUS1, CWC2, CWC15, CWC21, CWC22, CWC23, CWC24, CWC25, CWC27, ECM2, HSH155, IST3, ISY1, LEA1, MSL1, NTC20, PRP8, PRP9, PRP11, PRP19, PRP21, PRP22, PRP45, PRP46, SLU7, SMB1, SMD1, SMD2, SMD3, SMX2, SMX3, SNT309, SNU114, SPP2, SYF1, SYF2, RSE1 and YJU2. Interacts with IST3 and PML1.

The protein localises to the cytoplasm. It is found in the nucleus. Functionally, required for efficient splicing and pre-mRNA nuclear retention. May also be involved in positioning the proximal bud pole signal. In Saccharomyces cerevisiae (strain ATCC 204508 / S288c) (Baker's yeast), this protein is Pre-mRNA-splicing factor CWC26 (BUD13).